A 397-amino-acid polypeptide reads, in one-letter code: DNA-directed RNA polymerase subunit Rpo1C (397 aa).

It belongs to the RNA polymerase beta' chain family. In terms of assembly, part of the RNA polymerase complex.

It localises to the cytoplasm. It catalyses the reaction RNA(n) + a ribonucleoside 5'-triphosphate = RNA(n+1) + diphosphate. In terms of biological role, DNA-dependent RNA polymerase (RNAP) catalyzes the transcription of DNA into RNA using the four ribonucleoside triphosphates as substrates. Forms part of the jaw domain. In Methanococcus aeolicus (strain ATCC BAA-1280 / DSM 17508 / OCM 812 / Nankai-3), this protein is DNA-directed RNA polymerase subunit Rpo1C.